A 341-amino-acid chain; its full sequence is UDP-N-acetylenolpyruvoylglucosamine reductase (341 aa).

The FAD-binding PCMH-type domain occupies 15-185 (LAQSCADLVE…TAVGLRLVKR (171 aa)). Residue R161 is part of the active site. S231 serves as the catalytic Proton donor. The active site involves E327.

This sequence belongs to the MurB family. The cofactor is FAD.

The protein localises to the cytoplasm. The enzyme catalyses UDP-N-acetyl-alpha-D-muramate + NADP(+) = UDP-N-acetyl-3-O-(1-carboxyvinyl)-alpha-D-glucosamine + NADPH + H(+). The protein operates within cell wall biogenesis; peptidoglycan biosynthesis. Cell wall formation. The chain is UDP-N-acetylenolpyruvoylglucosamine reductase from Shewanella baltica (strain OS195).